The primary structure comprises 407 residues: Imidazolonepropionase (407 aa).

Fe(3+)-binding residues include His68 and His70. 2 residues coordinate Zn(2+): His68 and His70. Residues Arg77, Tyr140, and His173 each coordinate 4-imidazolone-5-propanoate. Residue Tyr140 participates in N-formimidoyl-L-glutamate binding. His238 contributes to the Fe(3+) binding site. Residue His238 participates in Zn(2+) binding. 4-imidazolone-5-propanoate is bound at residue Gln241. Fe(3+) is bound at residue Asp313. Asp313 serves as a coordination point for Zn(2+). N-formimidoyl-L-glutamate-binding residues include Asn315 and Gly317. Thr318 lines the 4-imidazolone-5-propanoate pocket.

This sequence belongs to the metallo-dependent hydrolases superfamily. HutI family. Requires Zn(2+) as cofactor. The cofactor is Fe(3+).

Its subcellular location is the cytoplasm. It catalyses the reaction 4-imidazolone-5-propanoate + H2O = N-formimidoyl-L-glutamate. It functions in the pathway amino-acid degradation; L-histidine degradation into L-glutamate; N-formimidoyl-L-glutamate from L-histidine: step 3/3. Catalyzes the hydrolytic cleavage of the carbon-nitrogen bond in imidazolone-5-propanoate to yield N-formimidoyl-L-glutamate. It is the third step in the universal histidine degradation pathway. This chain is Imidazolonepropionase, found in Burkholderia cenocepacia (strain ATCC BAA-245 / DSM 16553 / LMG 16656 / NCTC 13227 / J2315 / CF5610) (Burkholderia cepacia (strain J2315)).